A 384-amino-acid chain; its full sequence is 1-deoxy-D-xylulose 5-phosphate reductoisomerase (384 aa).

NADPH-binding residues include Thr10, Gly11, Ser12, Ile13, Arg37, Asn38, and Asn124. Lys125 is a binding site for 1-deoxy-D-xylulose 5-phosphate. Position 126 (Glu126) interacts with NADPH. Residue Asp150 participates in Mn(2+) binding. 1-deoxy-D-xylulose 5-phosphate is bound by residues Ser151, Glu152, Ser176, and His199. Glu152 provides a ligand contact to Mn(2+). NADPH is bound at residue Gly205. Residues Ser212, Asn217, Lys218, and Glu221 each coordinate 1-deoxy-D-xylulose 5-phosphate. Glu221 serves as a coordination point for Mn(2+).

Belongs to the DXR family. It depends on Mg(2+) as a cofactor. The cofactor is Mn(2+).

It catalyses the reaction 2-C-methyl-D-erythritol 4-phosphate + NADP(+) = 1-deoxy-D-xylulose 5-phosphate + NADPH + H(+). Its pathway is isoprenoid biosynthesis; isopentenyl diphosphate biosynthesis via DXP pathway; isopentenyl diphosphate from 1-deoxy-D-xylulose 5-phosphate: step 1/6. Catalyzes the NADPH-dependent rearrangement and reduction of 1-deoxy-D-xylulose-5-phosphate (DXP) to 2-C-methyl-D-erythritol 4-phosphate (MEP). The polypeptide is 1-deoxy-D-xylulose 5-phosphate reductoisomerase (Clostridium perfringens (strain 13 / Type A)).